Reading from the N-terminus, the 217-residue chain is GRB2-related adapter protein (217 aa).

In terms of domain architecture, SH3 1 spans 1–58 (MESVALYSFQATESDELAFNKGDTLKILNMEDDQNWYKAELRGAEGFVPKNYIRLKPH). The SH2 domain occupies 60 to 152 (WYSGRISRQL…KRQVFLQDEE (93 aa)). Positions 158–217 (PRACFAQAQFDFSAQDPSQLSFRRGDIIEVLERLDPSWWRGRLSGRIGFFPRSYVQPVHM) constitute an SH3 2 domain.

The protein belongs to the GRB2/sem-5/DRK family. In terms of assembly, associates through its SH2 domain with ligand-activated receptors for stem cell factor (KIT) and erythropoietin (EPOR). Also forms a stable complex with the Bcr-Abl oncoprotein. GRAP is associated with the Ras guanine nucleotide exchange factor SOS1, primarily through its N-terminal SH3 domain. Interacts with phosphorylated LAT upon TCR activation. Interacts with SHB.

The protein resides in the membrane. Its subcellular location is the synapse. In terms of biological role, couples signals from receptor and cytoplasmic tyrosine kinases to the Ras signaling pathway. Plays a role in the inner ear and in hearing. This is GRB2-related adapter protein (GRAP) from Bos taurus (Bovine).